The sequence spans 38 residues: Photosystem II reaction center protein X 2 (38 aa).

The helical transmembrane segment at 8 to 28 (FLWSLVYGAVVLGLLFGAIVF) threads the bilayer.

This sequence belongs to the PsbX family. Type 1 subfamily. PSII is composed of 1 copy each of membrane proteins PsbA, PsbB, PsbC, PsbD, PsbE, PsbF, PsbH, PsbI, PsbJ, PsbK, PsbL, PsbM, PsbT, PsbX, PsbY, PsbZ, Psb30/Ycf12, peripheral proteins PsbO, CyanoQ (PsbQ), PsbU, PsbV and a large number of cofactors. It forms dimeric complexes.

It is found in the cellular thylakoid membrane. In terms of biological role, involved in the binding and/or turnover of quinones at the Q(B) site of photosystem II (PSII). PSII is a light-driven water plastoquinone oxidoreductase, using light energy to abstract electrons from H(2)O, generating a proton gradient subsequently used for ATP formation. This chain is Photosystem II reaction center protein X 2, found in Synechococcus sp. (strain JA-3-3Ab) (Cyanobacteria bacterium Yellowstone A-Prime).